The following is a 41-amino-acid chain: Large ribosomal subunit protein bL36 (41 aa).

The protein belongs to the bacterial ribosomal protein bL36 family.

This Sinorhizobium medicae (strain WSM419) (Ensifer medicae) protein is Large ribosomal subunit protein bL36.